A 730-amino-acid polypeptide reads, in one-letter code: Denticleless protein homolog (730 aa).

Methionine 1 bears the N-acetylmethionine mark. WD repeat units follow at residues 47–89, 96–135, and 138–178; these read GVPV…FRKK, AHWN…LIGT, and GHQC…KDGF. A DDB1-binding motif motif is present at residues 168–171; the sequence is WDTR. Residues 188–198 are compositionally biased toward polar residues; it reads AHNTSDKQTPS. A disordered region spans residues 188-210; that stretch reads AHNTSDKQTPSKPKKKQNSKGLA. Threonine 196 carries the phosphothreonine modification. A Nuclear localization signal motif is present at residues 197–203; that stretch reads PSKPKKK. 4 WD repeats span residues 214 to 253, 267 to 308, 313 to 354, and 358 to 398; these read DFQQ…TAYR, SSTR…TSPV, GHQN…QPPT, and GHSQ…EEKP. Residues 243-246 carry the DDB1-binding motif motif; sequence WDLR. Residues 399-443 form a disordered region; sequence GGDKLSTVGWASQKKKESRPGLVTVTSSQSTPAKAPRAKCNPSNS. 2 positions are modified to phosphoserine: serine 410 and serine 426. Threonine 464 bears the Phosphothreonine; by CDK1 and CDK2 mark. Residues 465-498 are disordered; sequence PTFSIKTSPAKARSPINRRGSVSSVSPKPPSSFK. Residues serine 485, serine 490, serine 495, and serine 512 each carry the phosphoserine modification. Threonine 516 bears the Phosphothreonine mark. Phosphoserine is present on serine 557. Disordered regions lie at residues 599 to 631 and 644 to 703; these read SKDS…YASE and GEGS…TITP. Phosphoserine is present on residues serine 676 and serine 679. Residues 679–689 show a composition bias toward polar residues; it reads SPSSQTPNSRR. 2 positions are modified to phosphothreonine: threonine 684 and threonine 702. A Phosphoserine modification is found at serine 717.

This sequence belongs to the WD repeat cdt2 family. In terms of assembly, component of the DCX(DTL) E3 ubiquitin ligase complex (also called CRL4(CDT2)), at least composed of CUL4 (CUL4A or CUL4B), DDB1, DTL/CDT2 and RBX1. Interacts with CDKN1A. Interacts with DDB1. Interacts with FBXO11; SCF(FBXWO11) controls DTL stability but DCX(DTL) does not control FBXO11 stability. Interacts with CRY1. In terms of processing, ubiquitinated by the anaphase promoting complex/cyclosome (APC/C). Autoubiquitinated through 'Lys-48'-polyubiquitin chains in a PCNA-independent reaction, allowing proteasomal turnover. Polyubiquitinated by SCF(FBXO11) when not phosphorylated, leading to its degradation. A tight regulation of the polyubiquitination by SCF(FBXO11) is involved in the control of different processes such as TGF-beta signaling, cell cycle progression and exit. Phosphorylated at Thr-464 by CDK1/Cyclin-B and CDK2/Cyclin-A but not by CDK2/Cyclin-E, MAPK1 or PLK1. Phosphorylation at Thr-464 inhibits the interaction with FBXO11 and decreases upon cell cycle exit induced by TGF-beta or serum starvation. Expressed in placenta and testis, very low expression seen in skeletal muscle. Detected in all hematopoietic tissues examined, with highest expression in thymus and bone marrow. A low level detected in the spleen and lymph node, and barely detectable level in the peripheral leukocytes. RA treatment down-regulated the expression in NT2 cell.

It is found in the nucleus. Its subcellular location is the nucleus membrane. The protein resides in the cytoplasm. It localises to the cytoskeleton. The protein localises to the microtubule organizing center. It is found in the centrosome. Its subcellular location is the chromosome. It participates in protein modification; protein ubiquitination. Its function is as follows. Substrate-specific adapter of a DCX (DDB1-CUL4-X-box) E3 ubiquitin-protein ligase complex required for cell cycle control, DNA damage response and translesion DNA synthesis. The DCX(DTL) complex, also named CRL4(CDT2) complex, mediates the polyubiquitination and subsequent degradation of CDT1, CDKN1A/p21(CIP1), FBH1, KMT5A and SDE2. CDT1 degradation in response to DNA damage is necessary to ensure proper cell cycle regulation of DNA replication. CDKN1A/p21(CIP1) degradation during S phase or following UV irradiation is essential to control replication licensing. KMT5A degradation is also important for a proper regulation of mechanisms such as TGF-beta signaling, cell cycle progression, DNA repair and cell migration. Most substrates require their interaction with PCNA for their polyubiquitination: substrates interact with PCNA via their PIP-box, and those containing the 'K+4' motif in the PIP box, recruit the DCX(DTL) complex, leading to their degradation. In undamaged proliferating cells, the DCX(DTL) complex also promotes the 'Lys-164' monoubiquitination of PCNA, thereby being involved in PCNA-dependent translesion DNA synthesis. The DDB1-CUL4A-DTL E3 ligase complex regulates the circadian clock function by mediating the ubiquitination and degradation of CRY1. The chain is Denticleless protein homolog (DTL) from Homo sapiens (Human).